A 250-amino-acid polypeptide reads, in one-letter code: Cobalt transport protein CbiM (250 aa).

The N-terminal stretch at 1 to 26 (MNKKEKRIVAIAAAFALCFGISPAVN) is a signal peptide. A run of 6 helical transmembrane segments spans residues 38-58 (KYCI…YFSI), 68-88 (SITM…LKIP), 102-122 (LGAI…VLIF), 134-154 (TLGA…FGIY), 165-185 (LSGI…VTSI), and 209-229 (FAPT…VIMI).

The protein belongs to the CbiM family. As to quaternary structure, forms an energy-coupling factor (ECF) transporter complex composed of an ATP-binding protein (A component, CbiO), a transmembrane protein (T component, CbiQ) and 2 possible substrate-capture proteins (S components, CbiM and CbiN) of unknown stoichimetry.

It is found in the cell membrane. It functions in the pathway cofactor biosynthesis; adenosylcobalamin biosynthesis. Its function is as follows. Part of the energy-coupling factor (ECF) transporter complex CbiMNOQ involved in cobalt import. In Lachnoclostridium phytofermentans (strain ATCC 700394 / DSM 18823 / ISDg) (Clostridium phytofermentans), this protein is Cobalt transport protein CbiM.